A 486-amino-acid polypeptide reads, in one-letter code: Betaine aldehyde dehydrogenase (486 aa).

Residues threonine 23 and aspartate 90 each contribute to the K(+) site. 147–149 lines the NAD(+) pocket; that stretch reads GAW. Lysine 159 serves as the catalytic Charge relay system. Residues 173-176 and 226-229 each bind NAD(+); these read KPSE and ESGT. K(+) is bound at residue leucine 241. The Proton acceptor role is filled by glutamate 247. The NAD(+) site is built by glycine 249, cysteine 281, and glutamate 382. Cysteine 281 serves as the catalytic Nucleophile. Cysteine 281 carries the post-translational modification Cysteine sulfenic acid (-SOH). Residues lysine 452 and glycine 455 each contribute to the K(+) site. Catalysis depends on glutamate 459, which acts as the Charge relay system.

It belongs to the aldehyde dehydrogenase family. In terms of assembly, dimer of dimers. K(+) is required as a cofactor.

The catalysed reaction is betaine aldehyde + NAD(+) + H2O = glycine betaine + NADH + 2 H(+). Its pathway is amine and polyamine biosynthesis; betaine biosynthesis via choline pathway; betaine from betaine aldehyde: step 1/1. In terms of biological role, involved in the biosynthesis of the osmoprotectant glycine betaine. Catalyzes the irreversible oxidation of betaine aldehyde to the corresponding acid. This is Betaine aldehyde dehydrogenase from Vibrio parahaemolyticus serotype O3:K6 (strain RIMD 2210633).